Reading from the N-terminus, the 491-residue chain is UDP-N-acetylmuramate--L-alanine ligase (491 aa).

126 to 132 lines the ATP pocket; the sequence is GTHGKTT.

The protein belongs to the MurCDEF family.

It localises to the cytoplasm. It catalyses the reaction UDP-N-acetyl-alpha-D-muramate + L-alanine + ATP = UDP-N-acetyl-alpha-D-muramoyl-L-alanine + ADP + phosphate + H(+). The protein operates within cell wall biogenesis; peptidoglycan biosynthesis. Functionally, cell wall formation. This chain is UDP-N-acetylmuramate--L-alanine ligase, found in Salmonella choleraesuis (strain SC-B67).